The primary structure comprises 351 residues: Histidine protein kinase SaeS (351 aa).

Transmembrane regions (helical) follow at residues 9 to 29 (IIIG…IAYI) and 40 to 60 (TLTL…SIFI). The 54-residue stretch at 61-114 (NPLIQKIKQFNIKTKQFANGNYASNDKTFNSPKEIYELNQSFNKMASEITQQMN) folds into the HAMP domain. One can recognise a Histidine kinase domain in the interval 129–348 (NLAHDLKTPL…TMTVTLHKLD (220 aa)). Histidine 132 bears the Phosphohistidine; by autocatalysis mark.

Autophosphorylated.

Its subcellular location is the cell membrane. It catalyses the reaction ATP + protein L-histidine = ADP + protein N-phospho-L-histidine.. Member of the two-component regulatory system SaeR/SaeS involved in the regulation of staphylococcal virulence factors in a strain-dependent fashion. Probably functions as a membrane-associated protein kinase that upon sensing the appropriate signal, autophosphorylates and in turn activates the cytosolic response regulator SaeR. This Staphylococcus aureus (strain bovine RF122 / ET3-1) protein is Histidine protein kinase SaeS (saeS).